The chain runs to 410 residues: uncharacterized protein (410 aa).

Over residues 178-187 (QKNHRNQLST) the composition is skewed to polar residues. Disordered stretches follow at residues 178–203 (QKNHRNQLSTQKKQQQALQKAQQEHQ) and 236–272 (RAEQAAREQEKREREALAQRQKAEEKRTSKPYQPTVQ). The span at 188–198 (QKKQQQALQKA) shows a compositional bias: low complexity. A compositionally biased stretch (basic and acidic residues) spans 236-263 (RAEQAAREQEKREREALAQRQKAEEKRT).

This is an uncharacterized protein from Haemophilus influenzae (strain ATCC 51907 / DSM 11121 / KW20 / Rd).